The following is a 391-amino-acid chain: 23S rRNA (uracil(747)-C(5))-methyltransferase RlmC (391 aa).

[4Fe-4S] cluster contacts are provided by cysteine 5, cysteine 13, cysteine 16, and cysteine 95. S-adenosyl-L-methionine-binding residues include glutamine 220, phenylalanine 249, glutamate 276, and asparagine 322. Residue cysteine 349 is the Nucleophile of the active site.

It belongs to the class I-like SAM-binding methyltransferase superfamily. RNA M5U methyltransferase family. RlmC subfamily.

It catalyses the reaction uridine(747) in 23S rRNA + S-adenosyl-L-methionine = 5-methyluridine(747) in 23S rRNA + S-adenosyl-L-homocysteine + H(+). In terms of biological role, catalyzes the formation of 5-methyl-uridine at position 747 (m5U747) in 23S rRNA. This chain is 23S rRNA (uracil(747)-C(5))-methyltransferase RlmC, found in Actinobacillus pleuropneumoniae serotype 5b (strain L20).